Consider the following 251-residue polypeptide: Ubiquinone/menaquinone biosynthesis C-methyltransferase UbiE (251 aa).

S-adenosyl-L-methionine-binding positions include threonine 74, aspartate 95, and 123 to 124 (NA).

It belongs to the class I-like SAM-binding methyltransferase superfamily. MenG/UbiE family.

The catalysed reaction is a 2-demethylmenaquinol + S-adenosyl-L-methionine = a menaquinol + S-adenosyl-L-homocysteine + H(+). It carries out the reaction a 2-methoxy-6-(all-trans-polyprenyl)benzene-1,4-diol + S-adenosyl-L-methionine = a 5-methoxy-2-methyl-3-(all-trans-polyprenyl)benzene-1,4-diol + S-adenosyl-L-homocysteine + H(+). It functions in the pathway quinol/quinone metabolism; menaquinone biosynthesis; menaquinol from 1,4-dihydroxy-2-naphthoate: step 2/2. The protein operates within cofactor biosynthesis; ubiquinone biosynthesis. Functionally, methyltransferase required for the conversion of demethylmenaquinol (DMKH2) to menaquinol (MKH2) and the conversion of 2-polyprenyl-6-methoxy-1,4-benzoquinol (DDMQH2) to 2-polyprenyl-3-methyl-6-methoxy-1,4-benzoquinol (DMQH2). This Shewanella halifaxensis (strain HAW-EB4) protein is Ubiquinone/menaquinone biosynthesis C-methyltransferase UbiE.